Reading from the N-terminus, the 298-residue chain is MTTNSSGKPAGGISWRTYLALCKLKVVGHIVFTAIIGMFLAVPGVPPLDTAFWASLGIGFAAASAAALNHFLDRHADAEMARTQNRPLPSGDIRPAQVVGFALVLGIVAMAILIAFVNMLTAFLTFLSLIGYAVIYTVYLKRATPQNIVIGGAAGAAPPVLGWCAVTGSVHPYALLLFLLIFVWTPPHFWAYAIAKRDDYAKVDIPMLPVTHGIAFTQLHILLYTILLFLAGLMPYVTGMSGEIYLAAALIFGGIFVYYAIRLKRKADPRLAMQTFAYSLVYLVGIFSALLVDHYIVL.

9 helical membrane passes run 26-46 (VVGH…PGVP), 52-72 (FWAS…NHFL), 98-118 (VVGF…AFVN), 120-140 (LTAF…TVYL), 148-168 (IVIG…AVTG), 174-194 (ALLL…AYAI), 214-234 (IAFT…AGLM), 241-261 (SGEI…YYAI), and 278-298 (YSLV…YIVL).

Belongs to the UbiA prenyltransferase family. Protoheme IX farnesyltransferase subfamily.

It is found in the cell inner membrane. It catalyses the reaction heme b + (2E,6E)-farnesyl diphosphate + H2O = Fe(II)-heme o + diphosphate. Its pathway is porphyrin-containing compound metabolism; heme O biosynthesis; heme O from protoheme: step 1/1. In terms of biological role, converts heme B (protoheme IX) to heme O by substitution of the vinyl group on carbon 2 of heme B porphyrin ring with a hydroxyethyl farnesyl side group. The polypeptide is Protoheme IX farnesyltransferase (Methylococcus capsulatus (strain ATCC 33009 / NCIMB 11132 / Bath)).